An 848-amino-acid polypeptide reads, in one-letter code: MPFGNDPPDYVHLRSNESQMQLITISENSDIPTPSGSPCFNAPARDEAPSVIFIPGKKFQGTFRWWKSRTTMEKLLLPVLLLFCLLTAVLLAVIINTDKRIEAMKTDHATQTEHAGFGDPTENPTKTAEDPRVPPIVPEAPTSPEPEVTTSTEKPKEPEVCSTPGCVRAATHFLNAMNTSVDPCDDFFEFACGQWNDQHPIPDDMYGFGTFAYAREQVRQQLRVLLEQEVVTESESINMARATYRSCMNKTQLDELMTGPLFETLTELGEWPLLQENWDKTKFNFTSLLVNSRRDYGVDVFFQLYIYADSKNTSRNTLFIDQSTLALGRGTRDYYLNTTLFSSHMTAYRKYLRQIAHLLKTDGNLTRSESEMNADIEKIIDFEIELAKIIVAEDERRNNTRLYNKRQIQDLYNLLPQVDWVPFFQSIAPSDLTHLFHNETEIIICEIEYLQHVSELIEKTDVGLLTNYVLWRVVQSNVRYLDERFEDIKQDFLKVMTGQQQSPPRWKDCAQVPSTVLPLAAGAIYVQAHFQESDKHEALRMIMHLRNSFADLVRQNDWMDEETKAVAIEKANSMINNIGYPDVTNDLPKLDKQYLGLSISDSDTYYYIMKKSVVWMQSREFQKLTKPFDKHEFDISPAVVNAFYSPEKNAITFPAGILQPPFFSGTFPKAVNYGAIGAVIGHEITHGFDDQGSQYDKDGNLHNWWSESSLNSFDTRRRCIVEQYGNYTVPKTNFRVNGKLTQGENIADNGGVKEAFQAYQKYVTENGEEPRLPGLQQYTNEQIFFVSYAHFWCGKKKEAAAMQQVLTDEHSPEVFRVIGVLSNMQAFADVYKCPRNAPVNPDHKCIVW.

At 1–74 (MPFGNDPPDY…WWKSRTTMEK (74 aa)) the chain is on the cytoplasmic side. A helical; Signal-anchor for type II membrane protein membrane pass occupies residues 75-95 (LLLPVLLLFCLLTAVLLAVII). Residues 96-848 (NTDKRIEAMK…VNPDHKCIVW (753 aa)) are Extracellular-facing. A disordered region spans residues 108-161 (HATQTEHAGFGDPTENPTKTAEDPRVPPIVPEAPTSPEPEVTTSTEKPKEPEVC). The span at 133-144 (VPPIVPEAPTSP) shows a compositional bias: pro residues. A Peptidase M13 domain is found at 160-848 (VCSTPGCVRA…VNPDHKCIVW (689 aa)). A disulfide bridge connects residues Cys-161 and Cys-166. 8 N-linked (GlcNAc...) asparagine glycosylation sites follow: Asn-178, Asn-249, Asn-284, Asn-312, Asn-337, Asn-364, Asn-398, and Asn-438. 4 disulfides stabilise this stretch: Cys-184–Cys-833, Cys-192–Cys-793, Cys-247–Cys-509, and Cys-719–Cys-845. His-682 lines the Zn(2+) pocket. Residue Glu-683 is part of the active site. His-686 contributes to the Zn(2+) binding site. N-linked (GlcNAc...) asparagine glycosylation is present at Asn-726. Residue Glu-744 participates in Zn(2+) binding. The active-site Proton donor is the Asp-748.

This sequence belongs to the peptidase M13 family. Zn(2+) serves as cofactor.

Its subcellular location is the cell membrane. Functionally, probable cell surface protease. The sequence is that of Neprilysin-11 (nep-11) from Caenorhabditis elegans.